A 114-amino-acid polypeptide reads, in one-letter code: DNA polymerase epsilon subunit C (114 aa).

The tract at residues 91–114 (PDAVAPATGEEEQPKRRGRKPAQE) is disordered.

In terms of assembly, heterotetramer. Consists of four subunits: POL2, DPB2, DPB3 and DPB4.

The protein localises to the nucleus. Functionally, as accessory component of the DNA polymerase epsilon (DNA polymerase II) participates in chromosomal DNA replication. The protein is DNA polymerase epsilon subunit C (DPB3) of Yarrowia lipolytica (strain CLIB 122 / E 150) (Yeast).